A 125-amino-acid chain; its full sequence is ATP synthase epsilon chain (125 aa).

Belongs to the ATPase epsilon chain family. In terms of assembly, F-type ATPases have 2 components, CF(1) - the catalytic core - and CF(0) - the membrane proton channel. CF(1) has five subunits: alpha(3), beta(3), gamma(1), delta(1), epsilon(1). CF(0) has three main subunits: a, b and c.

The protein localises to the cell inner membrane. Produces ATP from ADP in the presence of a proton gradient across the membrane. This Aliarcobacter butzleri (strain RM4018) (Arcobacter butzleri) protein is ATP synthase epsilon chain.